We begin with the raw amino-acid sequence, 224 residues long: MPGGLLLGDEAPNFEANTTIGRIRFHDFLGDSWGILFSHPRDFTPVCTTELGRAAKLAPEFAKRNVKLIALSIDSVEDHLAWSKDINAYNGETPTEKLPFPIIDDKGRDLAILLGMLDPVEKDDNNMPVTARVVFIFGPDKKLKLSILYPATTGRNFDEILRVVDSLQLTGTKPVATPVDWKKGESVMVVPTLSEEEAKQCFPKGVFTKELPSGKKYLRYTPQP.

One can recognise a Thioredoxin domain in the interval 5 to 169; that stretch reads LLLGDEAPNF…ILRVVDSLQL (165 aa). The required and sufficient for targeting to lysosomes and lamellar bodies stretch occupies residues 31-40; that stretch reads DSWGILFSHP. Position 44 is a phosphothreonine (threonine 44). The active-site Cysteine sulfenic acid (-SOH) intermediate; for peroxidase activity is cysteine 47. Lysine 63 is modified (N6-acetyllysine). Phosphotyrosine is present on tyrosine 89. A Phosphothreonine modification is found at threonine 93. The For phospholipase activity role is filled by aspartate 140. At threonine 177 the chain carries Phosphothreonine; by MAPK. Lysine 209 is subject to N6-acetyllysine; alternate. Lysine 209 is subject to N6-succinyllysine; alternate.

The protein belongs to the peroxiredoxin family. Prx6 subfamily. In terms of assembly, homodimer. Interacts with GSTP1; mediates PRDX6 glutathionylation and regeneration. Interacts with APEX1. Interacts with STH. May interact with FAM168B. May interact with HTR2A. Irreversibly inactivated by overoxidation of Cys-47 to sulfinic acid (Cys-SO(2)H) and sulfonic acid (Cys-SO(3)H) forms upon oxidative stress. Post-translationally, phosphorylation at Thr-177 by MAP kinases increases the phospholipase activity of the enzyme. The phosphorylated form exhibits a greater lysophosphatidylcholine acyltransferase activity compared to the non-phosphorylated form. In terms of tissue distribution, highly expressed in heart, kidney and liver. Moderate expression in brain and stomach. Very low levels in intestine.

The protein localises to the cytoplasm. Its subcellular location is the lysosome. The catalysed reaction is a hydroperoxide + 2 glutathione = an alcohol + glutathione disulfide + H2O. The enzyme catalyses a 1,2-diacyl-sn-glycero-3-phosphocholine + H2O = a 1-acyl-sn-glycero-3-phosphocholine + a fatty acid + H(+). It catalyses the reaction a 1-acyl-sn-glycero-3-phosphocholine + an acyl-CoA = a 1,2-diacyl-sn-glycero-3-phosphocholine + CoA. It carries out the reaction 1-hexadecanoyl-sn-glycero-3-phosphocholine + hexadecanoyl-CoA = 1,2-dihexadecanoyl-sn-glycero-3-phosphocholine + CoA. The catalysed reaction is 1,2-dihexadecanoyl-sn-glycero-3-phosphocholine + H2O = 1-hexadecanoyl-sn-glycero-3-phosphocholine + hexadecanoate + H(+). Its activity is regulated as follows. MJ33 or lithium;[(2R)-1-hexadecoxy-3-(2,2,2-trifluoroethoxy)propan-2-yl] methyl phosphate inhibits its phospholipase A2 activity. CI-976 or 2,2-Dimethyl-N-(2,4,6-trimethoxyphenyl)dodecanamide inhibits its lysophosphatidylcholine acyltransferase activity. In terms of biological role, thiol-specific peroxidase that catalyzes the reduction of hydrogen peroxide and organic hydroperoxides to water and alcohols, respectively. Can reduce H(2)O(2) and short chain organic, fatty acid, and phospholipid hydroperoxides. Has phospholipase activity. Can either reduce the oxidized sn-2 fatty acyl group of phospholipids (peroxidase activity) or hydrolyze the sn-2 ester bond of phospholipids (phospholipase activity). These activities are dependent on binding to phospholipids at acidic pH and to oxidized phospholipds at cytosolic pH. Plays a role in cell protection against oxidative stress by detoxifying peroxides and in phospholipid homeostasis. Exhibits acyl-CoA-dependent lysophospholipid acyltransferase which mediates the conversion of lysophosphatidylcholine (1-acyl-sn-glycero-3-phosphocholine or LPC) into phosphatidylcholine (1,2-diacyl-sn-glycero-3-phosphocholine or PC). Shows a clear preference for LPC as the lysophospholipid and for palmitoyl CoA as the fatty acyl substrate. This Mus musculus (Mouse) protein is Peroxiredoxin-6 (Prdx6).